Consider the following 254-residue polypeptide: Type III pantothenate kinase (254 aa).

ATP is bound at residue 6–13; sequence DVGNSNIV. Substrate-binding positions include Y100 and 107–110; that span reads GADR. The active-site Proton acceptor is the D109. Residue D129 participates in K(+) binding. T132 provides a ligand contact to ATP. T184 provides a ligand contact to substrate.

This sequence belongs to the type III pantothenate kinase family. In terms of assembly, homodimer. Requires NH4(+) as cofactor. K(+) is required as a cofactor.

It is found in the cytoplasm. The catalysed reaction is (R)-pantothenate + ATP = (R)-4'-phosphopantothenate + ADP + H(+). The protein operates within cofactor biosynthesis; coenzyme A biosynthesis; CoA from (R)-pantothenate: step 1/5. Catalyzes the phosphorylation of pantothenate (Pan), the first step in CoA biosynthesis. This is Type III pantothenate kinase from Pelobacter propionicus (strain DSM 2379 / NBRC 103807 / OttBd1).